A 145-amino-acid chain; its full sequence is 3-dehydroquinate dehydratase 1 (145 aa).

The Proton acceptor role is filled by Tyr24. Substrate contacts are provided by Asn75, His81, and Asp88. The Proton donor role is filled by His101. Residues 102–103 (IS) and Arg112 each bind substrate.

It belongs to the type-II 3-dehydroquinase family. As to quaternary structure, homododecamer.

It carries out the reaction 3-dehydroquinate = 3-dehydroshikimate + H2O. It participates in metabolic intermediate biosynthesis; chorismate biosynthesis; chorismate from D-erythrose 4-phosphate and phosphoenolpyruvate: step 3/7. Functionally, catalyzes a trans-dehydration via an enolate intermediate. The protein is 3-dehydroquinate dehydratase 1 (aroQ1) of Agrobacterium fabrum (strain C58 / ATCC 33970) (Agrobacterium tumefaciens (strain C58)).